A 448-amino-acid polypeptide reads, in one-letter code: Phosphoglucosamine mutase (448 aa).

Catalysis depends on Ser-104, which acts as the Phosphoserine intermediate. Mg(2+) contacts are provided by Ser-104, Asp-243, Asp-245, and Asp-247. Ser-104 carries the post-translational modification Phosphoserine.

This sequence belongs to the phosphohexose mutase family. Mg(2+) is required as a cofactor. Post-translationally, activated by phosphorylation.

The enzyme catalyses alpha-D-glucosamine 1-phosphate = D-glucosamine 6-phosphate. Catalyzes the conversion of glucosamine-6-phosphate to glucosamine-1-phosphate. The protein is Phosphoglucosamine mutase of Xylella fastidiosa (strain 9a5c).